The chain runs to 129 residues: NADH-quinone oxidoreductase subunit A (129 aa).

The next 3 membrane-spanning stretches (helical) occupy residues 14–34 (LAIH…VAAW), 67–87 (FLIA…FAWA), and 95–115 (WLGL…LVYL).

It belongs to the complex I subunit 3 family. In terms of assembly, NDH-1 is composed of 14 different subunits. Subunits NuoA, H, J, K, L, M, N constitute the membrane sector of the complex.

It localises to the cell inner membrane. The enzyme catalyses a quinone + NADH + 5 H(+)(in) = a quinol + NAD(+) + 4 H(+)(out). Its function is as follows. NDH-1 shuttles electrons from NADH, via FMN and iron-sulfur (Fe-S) centers, to quinones in the respiratory chain. The immediate electron acceptor for the enzyme in this species is believed to be ubiquinone. Couples the redox reaction to proton translocation (for every two electrons transferred, four hydrogen ions are translocated across the cytoplasmic membrane), and thus conserves the redox energy in a proton gradient. This Rhodopseudomonas palustris (strain ATCC BAA-98 / CGA009) protein is NADH-quinone oxidoreductase subunit A.